The sequence spans 349 residues: Ferredoxin--NADP reductase 1 (349 aa).

Glu36, Lys44, Tyr48, Ile88, Leu123, Asp290, and Ser331 together coordinate FAD.

It belongs to the ferredoxin--NADP reductase type 2 family. In terms of assembly, homodimer. The cofactor is FAD.

The enzyme catalyses 2 reduced [2Fe-2S]-[ferredoxin] + NADP(+) + H(+) = 2 oxidized [2Fe-2S]-[ferredoxin] + NADPH. The polypeptide is Ferredoxin--NADP reductase 1 (Bacillus thuringiensis (strain Al Hakam)).